A 491-amino-acid polypeptide reads, in one-letter code: Pre-glycoprotein polyprotein GP complex (491 aa).

Gly-2 carries N-myristoyl glycine; by host lipidation. At 2-17 the chain is on the extracellular side; that stretch reads GQIVTFFQEVPHVIEE. The helical transmembrane segment at 18–33 threads the bilayer; it reads VMNIVLIALSVLAVLK. Over 34–58 the chain is Cytoplasmic; the sequence is GLYNFATCGLVGLVTFLLLCGRSCT. Cys-57 serves as a coordination point for Zn(2+). At 59–432 the chain is on the extracellular side; sequence TSLYKGVYEL…QGKTPLGLVD (374 aa). N-linked (GlcNAc...) asparagine; by host glycosylation is found at Asn-79, Asn-89, Asn-99, Asn-109, Asn-119, and Asn-167. 6 disulfide bridges follow: Cys-86–Cys-231, Cys-118–Cys-155, Cys-180–Cys-212, Cys-279–Cys-292, Cys-301–Cys-310, and Cys-364–Cys-385. An N-linked (GlcNAc...) asparagine; by host glycan is attached at Asn-224. Residues Asn-365, Asn-373, Asn-390, and Asn-395 are each glycosylated (N-linked (GlcNAc...) asparagine; by host). The chain crosses the membrane as a helical span at residues 433-453; the sequence is LFVFSTSFYLISIFLHLVKIP. Residues 454–491 are Cytoplasmic-facing; sequence THRHIVGKSCPKPHRLNHMGICSCGLYKQPGVPVKWKR. The Zn(2+) site is built by His-455, His-457, Cys-463, His-467, Cys-475, and Cys-477.

Belongs to the arenaviridae GPC protein family. In terms of assembly, interacts with glycoprotein G2. Part of the GP complex (GP-C) together with glycoprotein G1 and glycoprotein G2. The GP-complex interacts with protein Z, which interacts with ribonucleocapsid; these interactions may induce virion budding. As to quaternary structure, homotrimer; disulfide-linked. In pre-fusion state, G1 homotrimers bind G2 homotrimers via ionic interactions. Part of the GP complex (GP-C) together with glycoprotein G2 and the stable signal peptide. Interacts with the primary host receptor DAG1 on the cell surface; this interaction occurs at pH 8.0 but not at pH 6.0 and below. Upon virus internalization and at endosomal pH, interacts with the host lysosomal protein LAMP1; this interaction mediates G1 dissociation from GP-C and membrane fusion. The GP-complex interacts with protein Z, which interacts with ribonucleocapsid; these interactions may induce virion budding. Homotrimer. Interacts with the stable signal peptide. In pre-fusion state, G2 homotrimers bind G1 homotrimers via ionic interactions. Part of the GP complex (GP-C) together with glycoprotein G1 and the stable signal peptide. Acidification in the endosome triggers rearrangements, which ultimately leads to a 6 helix bundle formed by the two heptad repeat domains (HR1 and HR2) in post-fusion state. The GP-complex interacts with protein Z, which interacts with ribonucleocapsid; these interactions may induce virion budding. Specific enzymatic cleavages in vivo yield mature proteins. GP-C polyprotein is cleaved in the endoplasmic reticulum by the host protease MBTPS1. Only cleaved glycoprotein is incorporated into virions. In terms of processing, the SSP remains stably associated with the GP complex following cleavage by signal peptidase and plays crucial roles in the trafficking of GP through the secretory pathway. Post-translationally, myristoylation is necessary for GP2-mediated fusion activity.

It localises to the virion membrane. The protein localises to the host endoplasmic reticulum membrane. It is found in the host Golgi apparatus membrane. The protein resides in the host cell membrane. In terms of biological role, functions as a cleaved signal peptide that is retained as the third component of the GP complex (GP-C). Helps to stabilize the spike complex in its native conformation. The SSP is required for efficient glycoprotein expression, post-translational maturation cleavage of G1 and G2, glycoprotein transport to the cell surface plasma membrane, formation of infectious virus particles, and acid pH-dependent glycoprotein-mediated cell fusion. Functionally, forms the virion spikes together with glycoprotein G2. The glycoprotein spike trimers are connected to the underlying matrix. Interacts with the host receptor. Mediates virus attachment to the host primary receptor alpha-dystroglycan DAG1 (alpha-DG) at the cell surface. This attachment induces virion internalization apparently through macropinocytosis. Following endocytosis, there is a pH-dependent switch from binding DAG1 to the host lysosomal receptor LAMP1. This latter binding triggers the dissociation of GP1, exposing the fusion subunit, GP2, such that fusion can occur. Down-modulates host DAG1. Its function is as follows. Forms the virion spikes together with glycoprotein G1. The glycoprotein spike trimers are connected to the underlying matrix. Class I viral fusion protein that directs fusion of viral and host endosomal membranes, leading to delivery of the nucleocapsid into the cytoplasm. Membrane fusion is mediated by irreversible conformational changes induced by acidification. This is Pre-glycoprotein polyprotein GP complex from Homo sapiens (Human).